Consider the following 651-residue polypeptide: Probable export ATP-binding/permease protein Pfl01_2215 (651 aa).

One can recognise an ABC transporter domain in the interval 6–244 (LQLTGISRSF…LSNEDAVPKS (239 aa)). Residue 42 to 49 (GASGSGKS) participates in ATP binding. A run of 5 helical transmembrane segments spans residues 250 to 270 (LVASLGLFKEAFNMAWVALIS), 276 to 296 (LLTMLGIVIGITSVVSISAIG), 524 to 544 (LALLLSLIAVISLVVGGIGVM), 585 to 605 (LGGAIGISLSYAIGHLFSLFI), and 614 to 634 (LTSVLTAVICSTLIGIVFGFV).

It belongs to the ABC transporter superfamily. Macrolide exporter (TC 3.A.1.122) family. Probably part of a tripartite efflux system, which is composed of an inner membrane transporter, a periplasmic membrane fusion protein, and an outer membrane component.

It is found in the cell inner membrane. Functionally, probably part of a tripartite efflux system. This Pseudomonas fluorescens (strain Pf0-1) protein is Probable export ATP-binding/permease protein Pfl01_2215.